We begin with the raw amino-acid sequence, 323 residues long: Phosphatidylethanolamine:ceramide ethanolaminephosphotransferase (323 aa).

Residues 1–26 (MAVPPVEMYSGSFWNRMRKPLPLRTQ) are Cytoplasmic-facing. The helical transmembrane segment at 27–47 (VIRFTVVFVIVSFILVVALQI) threads the bilayer. At 48–74 (THERMPDPKVTKPLPDLGFELLTKVPG) the chain is on the extracellular side. A helical membrane pass occupies residues 75-95 (MYVLADCCIGFLNILSVFTAF). Over 96 to 147 (KLYLLHRHCVGSGEPELPCNIPGVSRFFLSVWLCKENCRIELRNIHTIAWIR) the chain is Cytoplasmic. A helical membrane pass occupies residues 148–168 (FITSYALLLLSRSIIMVVTSL). Residues 169-187 (PNPDDLCQNPPKIENRVKD) lie on the Extracellular side of the membrane. Residues 188–208 (ILLTVLTAGAGSIHCGDLMYS) form a helical membrane-spanning segment. The Cytoplasmic segment spans residues 209–233 (GHTVILTLHLMFHWIYGAMVHWSFR). The helical transmembrane segment at 234 to 254 (PVVTVVAIFGYYCIVASRFHY) threads the bilayer. The Extracellular segment spans residues 255–257 (TDD). The helical transmembrane segment at 258–278 (VLVAIYLTIATFIAVGHNADG) threads the bilayer. Over 279-323 (APWQLQLFIRWWPCCGANSREVAEDGVPVAIVIKNEEMMNFEGKS) the chain is Cytoplasmic.

The protein belongs to the sphingomyelin synthase family.

It localises to the membrane. It catalyses the reaction an N-acylsphing-4-enine + a 1,2-diacyl-sn-glycero-3-phosphoethanolamine = an N-acylsphing-4-enine 1-phosphoethanolamine + a 1,2-diacyl-sn-glycerol. The enzyme catalyses an N-acylsphinganine + a 1,2-diacyl-sn-glycero-3-phosphoethanolamine = an N-acylsphinganine-1-phosphoethanolamine + a 1,2-diacyl-sn-glycerol. In terms of biological role, predominantly synthesizes ethanolamine-phosphorylceramide (EPC), with minimal sphingomyelin (SM)/inositol phosphorylceramide (IPC) synthase activity. Specificity is likely to be defined by residues in the lumenal catalytic domain that interact with the polar head groups of the phospholipid donors. EPC is synthesized by both stages of the parasite life cycle, bloodstream forms (BSF) and procyclic forms (PCF), by transferring the phosphoethanolamine from a 1,2-diacyl-sn-glycero-3-phosphoethanolamine to an N-acylsphing-4-enine (ceramide) or an N-acylsphinganine (dihydroceramide). Similarly, SM is synthesized by transferring the phosphocholine from a 1,2-diacyl-sn-glycero-3-phosphocholine to ceramide or dihydroceramide by BSF and PCF, while IPC is confined to PCF. The ceramide/dihydroceramide ratios are skewed towards dihydroceramide in PCF parasites and ceramide in BSF parasites, this is likely due to differential expression and/or regulation of dihydroceramide desaturase, the enzyme responsible for converting dihydroceramide to ceramide. This is Phosphatidylethanolamine:ceramide ethanolaminephosphotransferase from Trypanosoma brucei brucei.